The primary structure comprises 163 residues: UPF0303 protein SAV_5210 (163 aa).

Belongs to the UPF0303 family.

The polypeptide is UPF0303 protein SAV_5210 (Streptomyces avermitilis (strain ATCC 31267 / DSM 46492 / JCM 5070 / NBRC 14893 / NCIMB 12804 / NRRL 8165 / MA-4680)).